Consider the following 215-residue polypeptide: 3-demethoxyubiquinol 3-hydroxylase (215 aa).

Residues Glu64, Glu94, His97, Glu146, Glu178, and His181 each coordinate Fe cation.

It belongs to the COQ7 family. Fe cation serves as cofactor.

It is found in the cell membrane. The enzyme catalyses a 5-methoxy-2-methyl-3-(all-trans-polyprenyl)benzene-1,4-diol + AH2 + O2 = a 3-demethylubiquinol + A + H2O. Its pathway is cofactor biosynthesis; ubiquinone biosynthesis. Catalyzes the hydroxylation of 2-nonaprenyl-3-methyl-6-methoxy-1,4-benzoquinol during ubiquinone biosynthesis. This chain is 3-demethoxyubiquinol 3-hydroxylase, found in Coxiella burnetii (strain CbuG_Q212) (Coxiella burnetii (strain Q212)).